The following is a 417-amino-acid chain: Hydroxysteroid dehydrogenase-like protein 2 (417 aa).

Residues 17-23 (GASRGIG), Lys42, and Asp74 each bind NADP(+). Tyr168 (proton acceptor) is an active-site residue. Residue Lys172 participates in NADP(+) binding. Residues 306 to 414 (SSPLQETFKA…KLEKILGQMN (109 aa)) enclose the SCP2 domain.

The protein belongs to the short-chain dehydrogenases/reductases (SDR) family.

It localises to the peroxisome. The protein resides in the mitochondrion. Functionally, has apparently no steroid dehydrogenase activity. Might act as a metabolic regulator that affects systemic adaptation to nutritional cues. In Xenopus tropicalis (Western clawed frog), this protein is Hydroxysteroid dehydrogenase-like protein 2 (hsdl2).